We begin with the raw amino-acid sequence, 337 residues long: Holliday junction branch migration complex subunit RuvB (337 aa).

A large ATPase domain (RuvB-L) region spans residues 1–182 (MEDRMVSASY…FGVLSAMEFY (182 aa)). The ATP site is built by Leu-21, Arg-22, Gly-63, Lys-66, Thr-67, Thr-68, Arg-172, Tyr-182, and Arg-219. Thr-67 contributes to the Mg(2+) binding site. The small ATPAse domain (RuvB-S) stretch occupies residues 183-253 (NEDELKEIIL…IAKNALSLLE (71 aa)). The head domain (RuvB-H) stretch occupies residues 256 to 337 (GEGFDKIDNK…REFKEQTKLT (82 aa)). DNA is bound by residues Arg-311 and Arg-316.

It belongs to the RuvB family. Homohexamer. Forms an RuvA(8)-RuvB(12)-Holliday junction (HJ) complex. HJ DNA is sandwiched between 2 RuvA tetramers; dsDNA enters through RuvA and exits via RuvB. An RuvB hexamer assembles on each DNA strand where it exits the tetramer. Each RuvB hexamer is contacted by two RuvA subunits (via domain III) on 2 adjacent RuvB subunits; this complex drives branch migration. In the full resolvosome a probable DNA-RuvA(4)-RuvB(12)-RuvC(2) complex forms which resolves the HJ.

It is found in the cytoplasm. The enzyme catalyses ATP + H2O = ADP + phosphate + H(+). Its function is as follows. The RuvA-RuvB-RuvC complex processes Holliday junction (HJ) DNA during genetic recombination and DNA repair, while the RuvA-RuvB complex plays an important role in the rescue of blocked DNA replication forks via replication fork reversal (RFR). RuvA specifically binds to HJ cruciform DNA, conferring on it an open structure. The RuvB hexamer acts as an ATP-dependent pump, pulling dsDNA into and through the RuvAB complex. RuvB forms 2 homohexamers on either side of HJ DNA bound by 1 or 2 RuvA tetramers; 4 subunits per hexamer contact DNA at a time. Coordinated motions by a converter formed by DNA-disengaged RuvB subunits stimulates ATP hydrolysis and nucleotide exchange. Immobilization of the converter enables RuvB to convert the ATP-contained energy into a lever motion, pulling 2 nucleotides of DNA out of the RuvA tetramer per ATP hydrolyzed, thus driving DNA branch migration. The RuvB motors rotate together with the DNA substrate, which together with the progressing nucleotide cycle form the mechanistic basis for DNA recombination by continuous HJ branch migration. Branch migration allows RuvC to scan DNA until it finds its consensus sequence, where it cleaves and resolves cruciform DNA. The sequence is that of Holliday junction branch migration complex subunit RuvB from Clostridium novyi (strain NT).